The chain runs to 392 residues: L-rhamnonate dehydratase (392 aa).

Substrate-binding residues include histidine 22 and arginine 48. Residues aspartate 214, glutamate 240, and glutamate 268 each contribute to the Mg(2+) site. Histidine 318 (proton acceptor) is an active-site residue. Glutamate 338 is a binding site for substrate.

This sequence belongs to the mandelate racemase/muconate lactonizing enzyme family. RhamD subfamily. Homooctamer; tetramer of dimers. The cofactor is Mg(2+).

It carries out the reaction L-rhamnonate = 2-dehydro-3-deoxy-L-rhamnonate + H2O. Its function is as follows. Catalyzes the dehydration of L-rhamnonate to 2-keto-3-deoxy-L-rhamnonate (KDR). The protein is L-rhamnonate dehydratase of Burkholderia cenocepacia (strain HI2424).